We begin with the raw amino-acid sequence, 401 residues long: Ribosomal RNA dihydrouridine synthase (401 aa).

FAD is bound by residues A15, D34, N35, R41, G47, N52, V132, E371, and F384.

It belongs to the BaiN/RdsA family. RdsA subfamily. It depends on FAD as a cofactor.

The catalysed reaction is a 5,6-dihydrouridine in mRNA + NAD(+) = a uridine in mRNA + NADH + H(+). Functionally, catalyzes the synthesis of 5,6-dihydrouridine (D) at position 2449 in 23S rRNA. The protein is Ribosomal RNA dihydrouridine synthase of Haemophilus influenzae (strain ATCC 51907 / DSM 11121 / KW20 / Rd).